The following is a 43-amino-acid chain: Protein PsbN (43 aa).

Residues 7–27 (VTIFISGLLVSFTGYALYIAF) form a helical membrane-spanning segment.

The protein belongs to the PsbN family.

It is found in the plastid. The protein localises to the chloroplast thylakoid membrane. Functionally, may play a role in photosystem I and II biogenesis. The chain is Protein PsbN from Dioscorea bulbifera (Air potato).